The primary structure comprises 571 residues: uncharacterized protein (571 aa).

Disordered stretches follow at residues 71-128, 142-258, and 298-336; these read TNHY…RVTA, NKND…PQNE, and LNRQ…TTKR. The span at 88 to 113 shows a compositional bias: polar residues; it reads PNRSGVSSPVNDGASSPTQRGGTTPA. Residues 168 to 184 are compositionally biased toward pro residues; that stretch reads RGYPGPGPRGYPGPGPR. The span at 205–215 shows a compositional bias: low complexity; sequence QGPRRYSCPGP. Positions 217–234 are enriched in gly residues; it reads GYPGPGSSGRPDPGGGLQ. Residues 311 to 326 show a composition bias toward low complexity; sequence PEKQQTPPPEETQNAQ.

This is an uncharacterized protein from Drosophila melanogaster (Fruit fly).